Here is a 172-residue protein sequence, read N- to C-terminus: Nascent polypeptide-associated complex subunit beta (172 aa).

Disordered stretches follow at residues 36 to 58 (KTGK…GDDK) and 142 to 172 (QNMQ…DKVE). A compositionally biased stretch (basic residues) spans 41–50 (TPRRKMKRAP). An NAC-A/B domain is found at 54 to 119 (GGDDKKLQQT…GEDKELTELV (66 aa)).

Belongs to the NAC-beta family. As to quaternary structure, part of the nascent polypeptide-associated complex (NAC), consisting of EGD2 and EGD1. NAC associates with ribosomes via EGD1.

Its subcellular location is the cytoplasm. It is found in the nucleus. Component of the nascent polypeptide-associated complex (NAC), a dynamic component of the ribosomal exit tunnel, protecting the emerging polypeptides from interaction with other cytoplasmic proteins to ensure appropriate nascent protein targeting. The NAC complex also promotes mitochondrial protein import by enhancing productive ribosome interactions with the outer mitochondrial membrane and blocks the inappropriate interaction of ribosomes translating non-secretory nascent polypeptides with translocation sites in the membrane of the endoplasmic reticulum. EGD1 may act as a transcription factor that exert a negative effect on the expression of several genes that are transcribed by RNA polymerase II. The protein is Nascent polypeptide-associated complex subunit beta (EGD1) of Pyricularia oryzae (strain 70-15 / ATCC MYA-4617 / FGSC 8958) (Rice blast fungus).